The primary structure comprises 233 residues: DNA repair protein RecO (233 aa).

Belongs to the RecO family.

In terms of biological role, involved in DNA repair and RecF pathway recombination. This is DNA repair protein RecO from Pseudomonas paraeruginosa (strain DSM 24068 / PA7) (Pseudomonas aeruginosa (strain PA7)).